The chain runs to 56 residues: Calsequestrin-1 (56 aa).

At tyrosine 9 the chain carries Phosphotyrosine. Serine 47 bears the Phosphoserine mark.

The protein belongs to the calsequestrin family. In terms of assembly, monomer; increases in response to a depletion of intracellular calcium. Homodimer. Homotetramer and homopolymer. Can form linear homooligomers. Ca(2+) ions promote oligomerization. Interacts (via C-terminal end and preferentially with the monomeric form) with STIM1; this interaction increases in response to a depletion of intracellular calcium, decreases both STIM1 aggregation and clustering, interaction of STIM1 with ORAI1 and store-operated Ca(2+) entry (SOCE) activity. Interacts with ASPH and TRDN. Post-translationally, N-glycosylated.

The protein resides in the endoplasmic reticulum. It localises to the sarcoplasmic reticulum. Its subcellular location is the sarcoplasmic reticulum lumen. The protein localises to the sarcoplasmic reticulum membrane. It is found in the mitochondrion matrix. In terms of biological role, calsequestrin is a high-capacity, moderate affinity, calcium-binding protein and thus acts as an internal calcium store in muscle. Calcium ions are bound by clusters of acidic residues at the protein surface, often at the interface between subunits. Can bind around 80 Ca(2+) ions. Regulates the release of lumenal Ca(2+) via the calcium release channel RYR1; this plays an important role in triggering muscle contraction. Negatively regulates store-operated Ca(2+) entry (SOCE) activity. This Canis lupus familiaris (Dog) protein is Calsequestrin-1 (CASQ1).